A 427-amino-acid polypeptide reads, in one-letter code: Trigger factor (427 aa).

One can recognise a PPIase FKBP-type domain in the interval 163–248 (GDTVILDFEG…LHEIKTKEVP (86 aa)).

It belongs to the FKBP-type PPIase family. Tig subfamily.

The protein resides in the cytoplasm. The catalysed reaction is [protein]-peptidylproline (omega=180) = [protein]-peptidylproline (omega=0). Involved in protein export. Acts as a chaperone by maintaining the newly synthesized protein in an open conformation. Functions as a peptidyl-prolyl cis-trans isomerase. This is Trigger factor from Listeria innocua serovar 6a (strain ATCC BAA-680 / CLIP 11262).